Here is a 442-residue protein sequence, read N- to C-terminus: Phosphatidylserine synthase 2 (442 aa).

The Cytoplasmic portion of the chain corresponds to 1 to 40 (MRRGERRGPAGPLGDGPALGLRRSTESEVYDDGTNTFFWR). A helical transmembrane segment spans residues 41 to 61 (AHTLTVLFILTCALGYVTLLE). Topologically, residues 62–74 (ETPQDTAYNTKRG) are lumenal. Residues 75–95 (IVASILVFLCFGVTQAKDGPF) form a helical membrane-spanning segment. Residues 96 to 104 (SRPHPAYWR) are Cytoplasmic-facing. Residues 105–125 (FWLCVSVVYELFLIFILFQTV) form a helical membrane-spanning segment. The Lumenal segment spans residues 126 to 291 (QDGRQFMKYI…EWKPASSLRR (166 aa)). Asparagine 159 and asparagine 215 each carry an N-linked (GlcNAc...) asparagine glycan. Residues 292 to 312 (WLAVCGIIFVFLLAELNTFYL) form a helical membrane-spanning segment. A topological domain (cytoplasmic) is located at residue lysine 313. Residues 314 to 334 (FVLWMPPEHYLVLLRLVFFVN) form a helical membrane-spanning segment. Residues 335-354 (VGGVAMREIYDFMDDPKFHK) are Lumenal-facing. The helical transmembrane segment at 355 to 375 (KLGQQAWLVAAITATEFLIVV) threads the bilayer. Residues 376-381 (KYDPYT) lie on the Cytoplasmic side of the membrane. Residues 382 to 402 (LTLSLPFYITQCWILGIILVL) form a helical membrane-spanning segment. Residues 403–442 (TWTAWRFFIRDITLRYKEIRRQKQEHKYEKDKCLSNGDGH) lie on the Lumenal side of the membrane.

Belongs to the phosphatidyl serine synthase family.

Its subcellular location is the endoplasmic reticulum membrane. It catalyses the reaction a 1,2-diacyl-sn-glycero-3-phosphoethanolamine + L-serine = a 1,2-diacyl-sn-glycero-3-phospho-L-serine + ethanolamine. It carries out the reaction 1-hexadecanoyl-2-(9Z-octadecenoyl)-sn-glycero-3-phosphoethanolamine + L-serine = 1-hexadecanoyl-2-(9Z-octadecenoyl)-sn-glycero-3-phospho-L-serine + ethanolamine. The enzyme catalyses 1-hexadecanoyl-2-(4Z,7Z,10Z,13Z,16Z,19Z-docosahexaenoyl)-sn-glycero-3-phosphoethanolamine + L-serine = 1-hexadecanoyl-2-(4Z,7Z,10Z,13Z,16Z,19Z-docosahexaenoyl)-sn-glycero-3-phosphoserine + ethanolamine. The catalysed reaction is 1-octadecanoyl-2-(5Z,8Z,11Z,14Z)-eicosatetraenoyl-sn-glycero-3-phosphoethanolamine + L-serine = 1-octadecanoyl-2-(5Z,8Z,11Z,14Z)-eicosatetraenoyl-sn-glycero-3-phosphoserine + ethanolamine. It catalyses the reaction 1-octadecanoyl-2-(4Z,7Z,10Z,13Z,16Z,19Z-docosahexaenoyl)-sn-glycero-3-phosphoethanolamine + L-serine = 1-octadecanoyl-2-(4Z,7Z,10Z,13Z,16Z,19Z-docosahexaenoyl)-sn-glycero-3-phosphoserine + ethanolamine. It carries out the reaction 1-(1Z-octadecenyl)-2-(4Z,7Z,10Z,13Z,16Z,19Z-docosahexaenoyl)-sn-glycero-3-phosphoethanolamine + L-serine = 1-(1Z-octadecenyl)-2-(4Z,7Z,10Z,13Z,16Z,19Z-docosahexaenoyl)-sn-glycero-3-phospho-L-serine + ethanolamine. The enzyme catalyses 1-octadecanoyl-2-(9Z-octadecenoyl)-sn-glycero-3-phosphoethanolamine + L-serine = 1-octadecanoyl-2-(9Z-octadecenoyl)-sn-glycero-3-phospho-L-serine + ethanolamine. The catalysed reaction is 1-(1Z-octadecenyl)-2-(9Z-octadecenoyl)-sn-glycero-3-phosphoethanolamine + L-serine = 1-(1Z-octadecenyl)-2-(9Z-octadecenoyl)-sn-glycero-3-phospho-L-serine + ethanolamine. It catalyses the reaction 1-(1Z-octadecenyl)-2-(5Z,8Z,11Z,14Z- eicosatetraenoyl)-sn-glycero-3-phosphoethanolamine + L-serine = 1-(1Z-octadecenyl)-2-(5Z,8Z,11Z,14Z-eicosatetraenoyl)-sn-glycero-3-phospho-L-serine + ethanolamine. It participates in phospholipid metabolism; phosphatidylserine biosynthesis. Functionally, catalyzes a base-exchange reaction in which the polar head group of phosphatidylethanolamine (PE) or phosphatidylcholine (PC) is replaced by L-serine. Catalyzes the conversion of phosphatatidylethanolamine and does not act on phosphatidylcholine. Can utilize both phosphatidylethanolamine (PE) plasmalogen and diacyl PE as substrate and the latter is six times better utilized, indicating the importance of an ester linkage at the sn-1 position. Although it shows no sn-1 fatty acyl preference, exhibits significant preference towards docosahexaenoic acid (22:6n-3) compared with 18:1 or 20:4 at the sn-2 position. This chain is Phosphatidylserine synthase 2 (PTDSS1), found in Gallus gallus (Chicken).